The primary structure comprises 271 residues: Putative pirin-like protein At3g59260 (271 aa).

This sequence belongs to the pirin family.

It localises to the nucleus. This chain is Putative pirin-like protein At3g59260, found in Arabidopsis thaliana (Mouse-ear cress).